The sequence spans 153 residues: Large ribosomal subunit protein uL15 (153 aa).

The interval 1–47 (MRLHELSPAPGSRKDRKRVGRGDAGRGNYSGRGMKGQKARSGGATRP) is disordered.

It belongs to the universal ribosomal protein uL15 family. Part of the 50S ribosomal subunit.

Binds to the 23S rRNA. The protein is Large ribosomal subunit protein uL15 of Dehalococcoides mccartyi (strain ATCC BAA-2100 / JCM 16839 / KCTC 5957 / BAV1).